The sequence spans 281 residues: Diaminopimelate epimerase (281 aa).

3 residues coordinate substrate: asparagine 13, glutamine 46, and asparagine 66. Cysteine 75 serves as the catalytic Proton donor. Substrate is bound by residues 76–77, asparagine 160, asparagine 193, and 211–212; these read GN and ER. The active-site Proton acceptor is the cysteine 220. Residue 221 to 222 coordinates substrate; sequence GT.

This sequence belongs to the diaminopimelate epimerase family. In terms of assembly, homodimer.

The protein resides in the cytoplasm. The enzyme catalyses (2S,6S)-2,6-diaminopimelate = meso-2,6-diaminopimelate. It functions in the pathway amino-acid biosynthesis; L-lysine biosynthesis via DAP pathway; DL-2,6-diaminopimelate from LL-2,6-diaminopimelate: step 1/1. Its function is as follows. Catalyzes the stereoinversion of LL-2,6-diaminopimelate (L,L-DAP) to meso-diaminopimelate (meso-DAP), a precursor of L-lysine and an essential component of the bacterial peptidoglycan. The polypeptide is Diaminopimelate epimerase (Acinetobacter baumannii (strain AB307-0294)).